The primary structure comprises 119 residues: Holo-[acyl-carrier-protein] synthase (119 aa).

Mg(2+)-binding residues include aspartate 8 and glutamate 58.

It belongs to the P-Pant transferase superfamily. AcpS family. Mg(2+) serves as cofactor.

The protein localises to the cytoplasm. It catalyses the reaction apo-[ACP] + CoA = holo-[ACP] + adenosine 3',5'-bisphosphate + H(+). Functionally, transfers the 4'-phosphopantetheine moiety from coenzyme A to a Ser of acyl-carrier-protein. In Bacillus cereus (strain ATCC 14579 / DSM 31 / CCUG 7414 / JCM 2152 / NBRC 15305 / NCIMB 9373 / NCTC 2599 / NRRL B-3711), this protein is Holo-[acyl-carrier-protein] synthase.